We begin with the raw amino-acid sequence, 83 residues long: Type 3 secretion system needle filament protein (83 aa).

The protein belongs to the SctF family. In terms of assembly, the core secretion machinery of the T3SS is composed of approximately 20 different proteins, including cytoplasmic components, a base, an export apparatus and a needle. This subunit polymerizes and forms the helical needle filament. Interacts with the needle tip protein IpaD/SctA. Interacts with the export apparatus components SpaP/SctR, SpaQ/SctS and SpaR/SctT.

The protein resides in the secreted. Its subcellular location is the cell surface. In terms of biological role, component of the type III secretion system (T3SS), also called injectisome, which is used to inject bacterial effector proteins into eukaryotic host cells. MxiH/SctF forms the external needle filament that protrudes from the bacterial surface. During infection, can induce innate immune responses. The needle proteins interact with host TLR2 or TLR4, and induce signaling by NF-kappa-B and/or AP-1. This activation is MyD88 dependent and results in increased expression of cytokines, including TNF-alpha, IL-6 and IL-8. In Shigella flexneri, this protein is Type 3 secretion system needle filament protein.